The chain runs to 671 residues: tRNA(Met) cytidine acetyltransferase TmcA (671 aa).

Residues Gln-180, 202-211, and Arg-319 contribute to the ATP site; that span reads GRGKSALAGQ. The region spanning 356 to 531 is the N-acetyltransferase domain; it reads QTLWQSDPET…SGCYTAMALL (176 aa). Residues 461 to 463, 468 to 474, Glu-499, and Arg-506 each bind acetyl-CoA; these read IAV and QREGTGR.

It belongs to the RNA cytidine acetyltransferase family. TmcA subfamily.

Its subcellular location is the cytoplasm. It carries out the reaction cytidine(34) in elongator tRNA(Met) + acetyl-CoA + ATP + H2O = N(4)-acetylcytidine(34) in elongator tRNA(Met) + ADP + phosphate + CoA + H(+). The enzyme catalyses 2-hydroxyisobutanoyl-CoA + L-lysyl-[protein] = N(6)-(2-hydroxyisobutanoyl)-L-lysyl-[protein] + CoA + H(+). With respect to regulation, ATP/GTP hydrolysis is stimulated by the addition of acetyl-CoA and tRNA(Met). Binding of acetyl-CoA to TmcA activates both ATPase and tRNA-binding activities. ATP promotes the 2-hydroxyisobutyryltransferase activity. Catalyzes the formation of N(4)-acetylcytidine (ac(4)C) at the wobble position of tRNA(Met), by using acetyl-CoA as an acetyl donor and ATP (or GTP). It recognizes the wobble base of tRNA(Met), thus distinguishing between tRNA(Met) and the structurally similar tRNA(Ile2). Could use an RNA helicase motor driven by ATP hydrolysis to deliver the wobble base of tRNA(Met) to the acetyltransferase domain of TmcA. Functionally, also functions as a lysine 2-hydroxyisobutyryltransferase to regulate transcription. Can specifically catalyze the 2-hydroxyisobutyrylation (Khib) of the DNA-binding protein H-NS. Hydroxyisobutyrylation of H-NS decreases its DNA-binding activity, promotes the expression of acid-resistance genes and enhances bacterial survival under extreme acid stress. The chain is tRNA(Met) cytidine acetyltransferase TmcA from Escherichia coli (strain K12).